We begin with the raw amino-acid sequence, 733 residues long: Ribosomal protein S6 kinase 2 alpha (733 aa).

Residues 18-38 (EDPENGHGSPEEGGRHTSKDE) form a disordered region. The Protein kinase 1 domain maps to 62–321 (FVLLKVLGQG…AEEIKRQPFF (260 aa)). Residues 68–76 (LGQGSFGKV) and lysine 94 each bind ATP. Aspartate 187 acts as the Proton acceptor in catalysis. The residue at position 221 (serine 221) is a Phosphoserine. The AGC-kinase C-terminal domain maps to 322–391 (STIDWNKLFR…VAPALVEEDA (70 aa)). Threonine 359 is modified (phosphothreonine). Serine 363 carries the post-translational modification Phosphoserine. Serine 380 is modified (phosphoserine; by autocatalysis). The 258-residue stretch at 416 to 673 (YTVRETIGVG…AKQVLQHEWI (258 aa)) folds into the Protein kinase 2 domain. Residues 422 to 430 (IGVGSYSVC) and lysine 445 each bind ATP. Residue aspartate 533 is the Proton acceptor of the active site. Threonine 571 carries the phosphothreonine modification. Position 730 is a phosphoserine (serine 730).

It belongs to the protein kinase superfamily. AGC Ser/Thr protein kinase family. S6 kinase subfamily. Mg(2+) is required as a cofactor. Post-translationally, autophosphorylated on Ser-380, as part of the activation process.

The enzyme catalyses L-seryl-[protein] + ATP = O-phospho-L-seryl-[protein] + ADP + H(+). The catalysed reaction is L-threonyl-[protein] + ATP = O-phospho-L-threonyl-[protein] + ADP + H(+). With respect to regulation, activated by multiple phosphorylations on threonine and serine residues. Its function is as follows. Serine/threonine kinase that may play a role in mediating the growth-factor and stress induced activation of transcription. This Xenopus laevis (African clawed frog) protein is Ribosomal protein S6 kinase 2 alpha (rps6ka).